We begin with the raw amino-acid sequence, 431 residues long: Ornithine decarboxylase (431 aa).

The residue at position 94 (K94) is an N6-(pyridoxal phosphate)lysine. Pyridoxal 5'-phosphate contacts are provided by residues S226, G264, and 297–300; that span reads EPGR. 340-341 is a substrate binding site; sequence YD. C376 functions as the Proton donor; shared with dimeric partner in the catalytic mechanism. D377 serves as a coordination point for substrate. Position 405 (Y405) interacts with pyridoxal 5'-phosphate.

The protein belongs to the Orn/Lys/Arg decarboxylase class-II family. Homodimer. Only the dimer is catalytically active, as the active sites are constructed of residues from both monomers. The cofactor is pyridoxal 5'-phosphate.

It carries out the reaction L-ornithine + H(+) = putrescine + CO2. It functions in the pathway amine and polyamine biosynthesis; putrescine biosynthesis via L-ornithine pathway; putrescine from L-ornithine: step 1/1. Inhibited by antizyme (AZ) in response to polyamine levels. AZ inhibits the assembly of the functional homodimer by binding to ODC monomers and targeting them for ubiquitin-independent proteolytic destruction by the 26S proteasome. Its function is as follows. Catalyzes the first and rate-limiting step of polyamine biosynthesis that converts ornithine into putrescine, which is the precursor for the polyamines, spermidine and spermine. Polyamines are essential for cell proliferation and are implicated in cellular processes, ranging from DNA replication to apoptosis. This chain is Ornithine decarboxylase, found in Datura stramonium (Jimsonweed).